Consider the following 434-residue polypeptide: GTPase Obg (434 aa).

The Obg domain maps to 1-159; it reads MQFIDRCQIK…KTVRLELKYL (159 aa). In terms of domain architecture, OBG-type G spans 160–329; it reads ANVGIVGYPN…LVDRVFDLYQ (170 aa). Residues 166-173, 191-195, 212-215, 282-285, and 310-312 contribute to the GTP site; these read GYPNAGKS, FTTLV, DIPG, NKMD, and ISA. The Mg(2+) site is built by Ser-173 and Thr-193. The 79-residue stretch at 356–434 folds into the OCT domain; that stretch reads EKTIDDDPLD…ICDYEYLIDE (79 aa).

This sequence belongs to the TRAFAC class OBG-HflX-like GTPase superfamily. OBG GTPase family. In terms of assembly, monomer. Requires Mg(2+) as cofactor.

The protein localises to the cytoplasm. An essential GTPase which binds GTP, GDP and possibly (p)ppGpp with moderate affinity, with high nucleotide exchange rates and a fairly low GTP hydrolysis rate. Plays a role in control of the cell cycle, stress response, ribosome biogenesis and in those bacteria that undergo differentiation, in morphogenesis control. The polypeptide is GTPase Obg (Mycoplasmoides gallisepticum (strain R(low / passage 15 / clone 2)) (Mycoplasma gallisepticum)).